Consider the following 522-residue polypeptide: MYPFNRTTSIHAESASQHIDELDDDDFGRSNGKFYSNRHSQMDSDVVAHQVPPGSPVEKTILASILEMSTINDMWVKTFTAPGANKKDKKRRESLFECSWRGVHCVSNSLRSILFLFRLLAIFPATTDRKSRRKRNHRSIIKLILYVNYIVLAVLLNSFLIKMNFKVLMLYKHKFGLMHTGTVASMITATKPVINVFVIVLSAIKFKSHQRLLKTIDMVDVCFRSAFGVSPPLRIYKFVFFFTLLIIFFSALILKVVEFVGTGEIFGEHILTDCSFILVPVLSLWNIIPLLYYHLYNILVRFYCRTLIKSMNREHKKRHFSLKFYYEQFTRITNVQEAVGDVFNPLLLFSLAWSLLVLCLTLYFLSEPTSTLLVPITPEQVTNPKIREKLNITVHVKICWAAYQVVMAILHIIIICSTGMMTNETTRQIVNAVLRIVPDANADLDRFQISCFVHKMTTQFMWGMTVWRAFPLERTTFFTLISVIVTYSLLLFRFKDDMVQNPPYMAAMAVFNTSAVPTPAPG.

A run of 7 helical transmembrane segments spans residues 140-160 (IIKLILYVNYIVLAVLLNSFL), 184-204 (ASMITATKPVINVFVIVLSAI), 238-258 (FVFFFTLLIIFFSALILKVVE), 276-296 (FILVPVLSLWNIIPLLYYHLY), 345-365 (PLLLFSLAWSLLVLCLTLYFL), 398-418 (ICWAAYQVVMAILHIIIICST), and 472-492 (LERTTFFTLISVIVTYSLLLF).

It belongs to the G-protein coupled receptor family. Expressed in some neurons in the head, the HSN neurons and the PVQ interneurons of the tail.

Its subcellular location is the membrane. Its function is as follows. Orphan receptor. Regulates egg-laying probably by activating guanine nucleotide-binding protein goa-1, in the hermaphrodite-specific neurons (HSNs). The chain is Probable G-protein coupled receptor egl-47 from Caenorhabditis elegans.